Consider the following 311-residue polypeptide: Purine nucleoside phosphorylase (311 aa).

N-acetylserine is present on serine 2. Residues serine 46, histidine 81, 101–103, and alanine 134 each bind phosphate; that span reads RLH. Glutamate 219 lines the a purine D-ribonucleoside pocket. Serine 238 is a phosphate binding site. An a purine D-ribonucleoside-binding site is contributed by asparagine 261. Serine 275 is subject to Phosphoserine.

The protein belongs to the PNP/MTAP phosphorylase family.

The enzyme catalyses a purine D-ribonucleoside + phosphate = a purine nucleobase + alpha-D-ribose 1-phosphate. It functions in the pathway purine metabolism; purine nucleoside salvage. Functionally, the purine nucleoside phosphorylases catalyze the phosphorolytic breakdown of the N-glycosidic bond in the beta-(deoxy)ribonucleoside molecules, with the formation of the corresponding free purine bases and pentose-1-phosphate. Cleaves guanosine and inosine. The protein is Purine nucleoside phosphorylase (PNP1) of Saccharomyces cerevisiae (strain ATCC 204508 / S288c) (Baker's yeast).